Here is a 1303-residue protein sequence, read N- to C-terminus: Protein STU1 (1303 aa).

3 disordered regions span residues 239 to 259, 531 to 664, and 953 to 977; these read RGSD…NTPV, SQRE…GAVS, and EASD…NSEH. The segment covering 249 to 259 has biased composition (polar residues); that stretch reads RANTPRSNTPV. Residues 554-568 show a composition bias toward basic and acidic residues; sequence SLKEAILEKNKELRQ. A compositionally biased stretch (polar residues) spans 573 to 583; that stretch reads SRNSGEQSTKI. Basic and acidic residues predominate over residues 596 to 609; it reads SRLEKSLLRPDVGH. Polar residues predominate over residues 618–629; that stretch reads SSWTYPSTQSGP. Residues 634–648 show a composition bias toward basic and acidic residues; that stretch reads KQRERSKTEVHKKSP. Composition is skewed to polar residues over residues 653-664 and 955-972; these read RPSSRLDTGAVS and SDSS…SSKR.

Belongs to the CLASP family. In terms of assembly, interacts with microtubules.

The protein resides in the cytoplasm. It localises to the cytoskeleton. The protein localises to the nucleus. It is found in the spindle. In terms of biological role, microtubule binding protein that promotes the stabilization of dynamic microtubules. Required for mitotic spindle formation. The chain is Protein STU1 (STU1) from Candida albicans (strain SC5314 / ATCC MYA-2876) (Yeast).